Consider the following 166-residue polypeptide: Phospholipase A2 inhibitor clone 08 (166 aa).

Positions 1-19 (MRLILLSSLLLLGIFLANG) are cleaved as a signal peptide. The C-type lectin domain occupies 46–161 (LKGAFLTVHR…CDDNLLVVCE (116 aa)). 2 disulfide bridges follow: C83-C160 and C138-C152. An N-linked (GlcNAc...) asparagine glycan is attached at N122.

The protein belongs to the alpha-type phospholipase A2 inhibitor family. In terms of assembly, homotrimer; non-covalently linked. In terms of tissue distribution, expressed by the liver.

It is found in the secreted. Functionally, this phospholipase A2 inhibitor binds directly phospholipase A2 in the presence or absence of calcium. The polypeptide is Phospholipase A2 inhibitor clone 08 (Bothrops moojeni (Lance-headed viper)).